The chain runs to 139 residues: Transcription antitermination protein NusB (139 aa).

The protein belongs to the NusB family.

Its function is as follows. Involved in transcription antitermination. Required for transcription of ribosomal RNA (rRNA) genes. Binds specifically to the boxA antiterminator sequence of the ribosomal RNA (rrn) operons. In Nitratiruptor sp. (strain SB155-2), this protein is Transcription antitermination protein NusB.